The chain runs to 268 residues: MAVNVYSTSVTSDNLSRHDMLAWINESLQLNLTKIEQLCSGAAYCQFMDMLFPGSIALKKVKFQAKLEHEYIQNFKILQAGFKRMGVDKIIPVDKLVKGKFQDNFEFVQWFKKFFDANYDGKEYDPVAARQGQETAVAPSLVAPALSKPKKPLGSSTAAPQRPIATQRTTAAPKAGPGMVRKNPGVGNGDDEAAELMQQVKVLKLTVEDLEKERDFYFGKLRNIELICQENEGENDPVLQRIVDILYATDEGFVIPDEGGPQEEQEEY.

At Ala2 the chain carries N-acetylalanine. One can recognise a Calponin-homology (CH) domain in the interval 14 to 116 (NLSRHDMLAW…FVQWFKKFFD (103 aa)). Lys66 bears the N6-crotonyllysine mark. At Tyr124 the chain carries Phosphotyrosine. The interaction with MTUS2/TIP150 stretch occupies residues 124–268 (YDPVAARQGQ…GGPQEEQEEY (145 aa)). Residues 146-180 (LSKPKKPLGSSTAAPQRPIATQRTTAAPKAGPGMV) are disordered. The span at 154-170 (GSSTAAPQRPIATQRTT) shows a compositional bias: polar residues. Residue Ser155 is modified to Phosphoserine. The region spanning 185–255 (GVGNGDDEAA…LYATDEGFVI (71 aa)) is the EB1 C-terminal domain. The interval 206–211 (TVEDLE) is interaction with APC. A DCTN1-binding region spans residues 208 to 268 (EDLEKERDFY…GGPQEEQEEY (61 aa)). The residue at position 220 (Lys220) is an N6-acetyllysine. The tract at residues 220–242 (KLRNIELICQENEGENDPVLQRI) is APC-binding. Residues 232 to 255 (EGENDPVLQRIVDILYATDEGFVI) are interaction with SKA1.

This sequence belongs to the MAPRE family. As to quaternary structure, homodimer. Heterodimer with MAPRE3. Interacts (via C-terminal residues 206-211) with APC (via C-terminal residues 2674-2845); the interaction inhibits association with and bundling of F-actin. Interacts with DCTN1, DIAPH1 and DIAPH2. Interacts with DCTN2, TERF1 and dynein intermediate chain. Interacts with CLASP2, DST, KIF2C and STIM1; probably required for their targeting to the growing microtubule plus ends. Interacts with MTUS2; interaction is direct and probably targets MTUS2 to microtubules. Interacts (via C-terminus) with SKA1 (via SXIP motif); the interaction is direct and stabilizes the kinetochore-microtubule attachment of the SKA1 complex. Interacts with APC2. Interacts with CLASP1. Interacts (via C-terminus) with CLIP1. Interacts with SLAIN2 and SLAIN1. Interacts with MACF1. Interacts with KIF18B; this interaction is required for efficient accumulation of KIF18B at microtubule plus ends. Interacts with MISP. Interacts with RABL2/RABL2A; binds preferentially to GTP-bound RABL2. Interacts with KCNAB2. Interacts with KNSTRN. Interacts with NCKAP5L. Interacts with AKAP9. Interacts with PDE4DIP isoform 2/MMG8/SMYLE; this interaction is required for its recruitment to the Golgi apparatus. May form a pericentrosomal complex with AKAP9, CDK5RAP2 and PDE4DIP isoform 2/MMG8/SMYLE; within this complex, MAPRE1 binding to CDK5RAP2 may be mediated by PDE4DIP. Contrary to other mammalian species, does not interact with CDK5RAP2, possibly due to the lack of conservation of the MAPRE1-binding motif in mouse CDK5RAP2. Interacts with AKNA. Interacts with GAS2L1, GAS2L2, and GAS2L3. Interacts with RARRES1 and AGBL2. Post-translationally, acetylation at Lys-220 by KAT2B/PCAF promotes dynamic kinetochore-microtubule interactions in early mitosis. In terms of processing, crotonylated by KAT5 during mitosis, promoting astral microtubule plasticity and dynamic connection between astral microtubules and the cortex during mitotic chromosome segregation, thereby ensuring accurate spindle positioning in mitosis. Decrotonylated by HDAC3. As to expression, expressed within the midpiece of sperm tail (at protein level).

The protein resides in the cytoplasm. It is found in the cytoskeleton. The protein localises to the microtubule organizing center. It localises to the centrosome. Its subcellular location is the spindle. The protein resides in the spindle pole. Functionally, plus-end tracking protein (+TIP) that binds to the plus-end of microtubules and regulates the dynamics of the microtubule cytoskeleton. Recruits other +TIP proteins to microtubules by binding to a conserved Ser-X-Leu-Pro (SXLP) motif in their polypeptide chains. Promotes cytoplasmic microtubule nucleation and elongation. Involved in mitotic spindle positioning by stabilizing microtubules and promoting dynamic connection between astral microtubules and the cortex during mitotic chromosome segregation. Assists chromosome alignment in metaphase by recruiting the SKA complex to the spindle and stabilizing its interactions with microtubule bundles (K-fibers). Also acts as a regulator of minus-end microtubule organization: interacts with the complex formed by AKAP9 and PDE4DIP, leading to recruit CAMSAP2 to the Golgi apparatus, thereby tethering non-centrosomal minus-end microtubules to the Golgi, an important step for polarized cell movement. Promotes elongation of CAMSAP2-decorated microtubule stretches on the minus-end of microtubules. Acts as a regulator of autophagosome transport via interaction with CAMSAP2. Functions downstream of Rho GTPases and DIAPH1 in stable microtubule formation. May play a role in cell migration. The chain is Microtubule-associated protein RP/EB family member 1 (Mapre1) from Mus musculus (Mouse).